The following is a 78-amino-acid chain: DNA import protein CedA1 (78 aa).

Helical transmembrane passes span 12-32 (STVT…GWAL) and 53-73 (AIIA…ISYI).

As to quaternary structure, forms a complex composed of CedA, CedA1 and CedA2.

The protein localises to the cell membrane. Functionally, part of the Ced system, which is involved in DNA import. The polypeptide is DNA import protein CedA1 (Sulfolobus acidocaldarius (strain ATCC 33909 / DSM 639 / JCM 8929 / NBRC 15157 / NCIMB 11770)).